A 307-amino-acid chain; its full sequence is Membrane protein insertase YidC 2 (307 aa).

The signal sequence occupies residues 1–23; that stretch reads MKLTLNRILFSGLALSILLTLTG. C24 carries N-palmitoyl cysteine lipidation. The S-diacylglycerol cysteine moiety is linked to residue C24. 5 consecutive transmembrane segments (helical) span residues 58–78, 135–155, 179–199, 209–225, and 231–251; these read LGYG…ILPL, LGGI…AMYF, VLTA…MMAV, TMMY…SFSL, and LYWL…TYLL. Residues 263-307 form a disordered region; the sequence is YAKNPPKAYQSTSSRKDVTPSQNMEQANLPKKIKSNRNAGKQRKR. Polar residues predominate over residues 271–288; sequence YQSTSSRKDVTPSQNMEQ. Basic residues predominate over residues 293–307; that stretch reads KKIKSNRNAGKQRKR.

It belongs to the OXA1/ALB3/YidC family. Type 2 subfamily.

It is found in the cell membrane. Its function is as follows. Required for the insertion and/or proper folding and/or complex formation of integral membrane proteins into the membrane. Involved in integration of membrane proteins that insert both dependently and independently of the Sec translocase complex, as well as at least some lipoproteins. The protein is Membrane protein insertase YidC 2 of Streptococcus pyogenes serotype M1.